The sequence spans 338 residues: Aspartate-semialdehyde dehydrogenase (338 aa).

NADP(+) is bound by residues 13–16 (TGNV) and 41–42 (NS). Arg-101 contributes to the phosphate binding site. The active-site Acyl-thioester intermediate is Cys-132. Residue Gln-159 participates in substrate binding. NADP(+) is bound by residues 162–163 (SG) and Pro-187. Lys-216 serves as a coordination point for phosphate. Arg-237 lines the substrate pocket. Residue His-244 is the Proton acceptor of the active site. Asn-317 contributes to the NADP(+) binding site.

The protein belongs to the aspartate-semialdehyde dehydrogenase family. In terms of assembly, homodimer.

It catalyses the reaction L-aspartate 4-semialdehyde + phosphate + NADP(+) = 4-phospho-L-aspartate + NADPH + H(+). The protein operates within amino-acid biosynthesis; L-lysine biosynthesis via DAP pathway; (S)-tetrahydrodipicolinate from L-aspartate: step 2/4. It functions in the pathway amino-acid biosynthesis; L-methionine biosynthesis via de novo pathway; L-homoserine from L-aspartate: step 2/3. Its pathway is amino-acid biosynthesis; L-threonine biosynthesis; L-threonine from L-aspartate: step 2/5. Functionally, catalyzes the NADPH-dependent formation of L-aspartate-semialdehyde (L-ASA) by the reductive dephosphorylation of L-aspartyl-4-phosphate. This chain is Aspartate-semialdehyde dehydrogenase, found in Rickettsia typhi (strain ATCC VR-144 / Wilmington).